A 339-amino-acid chain; its full sequence is mRNA cap guanine-N(7) methyltransferase 2 (339 aa).

Residues 1 to 277 enclose the mRNA cap 0 methyltransferase domain; sequence MAVTPHHRLY…LYSTFVFQKP (277 aa). S-adenosyl-L-methionine-binding positions include Lys-14, Asp-54, and 82 to 83; that span reads DP. Positions 314–339 are disordered; that stretch reads VSRTDILPPADNEKGILGPGPADMRL.

Belongs to the class I-like SAM-binding methyltransferase superfamily. mRNA cap 0 methyltransferase family.

It is found in the nucleus. The enzyme catalyses a 5'-end (5'-triphosphoguanosine)-ribonucleoside in mRNA + S-adenosyl-L-methionine = a 5'-end (N(7)-methyl 5'-triphosphoguanosine)-ribonucleoside in mRNA + S-adenosyl-L-homocysteine. Functionally, mRNA-capping methyltransferase that methylates the N7 position of the added guanosine to the 5'-cap structure of mRNAs. Binds RNA containing 5'-terminal GpppC. The polypeptide is mRNA cap guanine-N(7) methyltransferase 2 (Oryza sativa subsp. japonica (Rice)).